The chain runs to 2146 residues: YLP motif-containing protein 1 (2146 aa).

Disordered stretches follow at residues 1 to 381 (MYPN…ARLK) and 562 to 880 (PPVM…FKMQ). Pro residues predominate over residues 14–26 (YPPPPVPPPPPVA). 2 stretches are compositionally biased toward low complexity: residues 27 to 48 (LPEA…PSSS) and 58 to 79 (LAQL…LQPH). Composition is skewed to pro residues over residues 80–92 (HLPP…PPVM), 101–113 (QPPP…PPGP), 147–157 (PESPPVPPGSY), 165–175 (MPPPQPPPSYY), and 183–194 (YLPPAQPSPSQS). A compositionally biased stretch (low complexity) spans 195–237 (PPSQSYLAPTPSYSSSSSSSQSYLSHSQSYLPSSQASPSRPSQ). 2 stretches are compositionally biased toward polar residues: residues 256 to 279 (NKTT…QQQA) and 286 to 308 (STMT…LQQR). The span at 309 to 319 (TKVHLPGHKKG) shows a compositional bias: basic residues. Positions 325–334 (DTPEPVKEEV) are enriched in basic and acidic residues. Pro residues-rich tracts occupy residues 349 to 368 (EEPP…PPEE), 562 to 579 (PPVM…PGMP), and 586 to 642 (GPPP…PQGI). Positions 643–663 (PPQLTAAPVPPASSSQSSQVP) are enriched in low complexity. Polar residues predominate over residues 692-702 (AGPSEQVNSKA). Lys-735 is modified (N6-methyllysine). Ser-756 is subject to Phosphoserine. Basic and acidic residues predominate over residues 758 to 806 (RGPRFDGPRRFEDLGSRCEGPRPKGPRFEGNRPDGPRPRYEGHPAEGTK). At Arg-814 the chain carries Omega-N-methylarginine. Composition is skewed to polar residues over residues 820-835 (FYIT…QSGP) and 868-880 (DTSS…FKMQ). Ser-829 carries the post-translational modification Phosphoserine. Arg-831 bears the Omega-N-methylarginine mark. Lys-891 participates in a covalent cross-link: Glycyl lysine isopeptide (Lys-Gly) (interchain with G-Cter in SUMO2). 2 disordered regions span residues 895 to 1211 (AAQS…GRNA) and 1243 to 1351 (NRED…DDRW). 2 stretches are compositionally biased toward polar residues: residues 896–909 (AQSN…QQEP) and 923–933 (NWDQNVQSMET). Lys-983 is covalently cross-linked (Glycyl lysine isopeptide (Lys-Gly) (interchain with G-Cter in SUMO1); alternate). Residue Lys-983 forms a Glycyl lysine isopeptide (Lys-Gly) (interchain with G-Cter in SUMO2); alternate linkage. Basic and acidic residues-rich tracts occupy residues 994–1012 (NNQD…RLEG), 1027–1036 (RMEDTRDKGL), and 1053–1093 (KQED…REKV). Lys-1053 participates in a covalent cross-link: Glycyl lysine isopeptide (Lys-Gly) (interchain with G-Cter in SUMO1); alternate. Lys-1053 is covalently cross-linked (Glycyl lysine isopeptide (Lys-Gly) (interchain with G-Cter in SUMO2); alternate). Ser-1100 and Ser-1119 each carry phosphoserine. Basic and acidic residues-rich tracts occupy residues 1129–1211 (GSRE…GRNA) and 1243–1264 (NRED…RGPW). Residues 1266-1276 (DDWERDQDMDE) show a composition bias toward acidic residues. The segment covering 1277–1328 (DYNREMERDMDRDVDRISRPMDMYDRSLDNEWDRDYGRPLDEQESQFRERDI) has biased composition (basic and acidic residues). Positions 1330-1342 (SLPPLPPLPPLPP) are enriched in pro residues. Position 1402 is a phosphoserine (Ser-1402). Disordered regions lie at residues 1407–1438 (PSDV…SLDS), 1469–1573 (QKEQ…EQER), and 1602–1828 (IPSA…PPGR). Residues 1417–1430 (AEHMPSSHHSSEMM) are compositionally biased toward low complexity. Residues 1469–1480 (QKEQLQKMKDFG) are compositionally biased toward basic and acidic residues. Pro residues predominate over residues 1505–1520 (MYPPPGSYRPPPPMGK). Positions 1521-1539 (PPGSIVRPSAPPARSSVPV) are enriched in low complexity. 2 stretches are compositionally biased toward pro residues: residues 1540-1562 (TRPP…PPVI) and 1606-1636 (PVLP…PPPV). A Glycyl lysine isopeptide (Lys-Gly) (interchain with G-Cter in SUMO2) cross-link involves residue Lys-1652. 4 stretches are compositionally biased toward basic and acidic residues: residues 1662–1696 (ITLR…EPYF), 1704–1774 (ADHR…DRPV), 1783–1793 (GERRTYPEERM), and 1809–1828 (RVEK…PPGR). Lys-1710 is covalently cross-linked (Glycyl lysine isopeptide (Lys-Gly) (interchain with G-Cter in SUMO2)). Residues 2096–2103 (KKRVRWAD) are involved in interaction with PPP1CA.

In terms of assembly, interacts with PPP1CA and NCOA5. Forms a complex with ILF2, ILF3, KHDRBS1, RBMX, NCOA5 and PPP1CA. In terms of tissue distribution, expressed in neuronal, neuroblastoma and embryonic kidney cell lines (at protein level).

Its subcellular location is the nucleus. It localises to the nucleus speckle. Plays a role in the reduction of telomerase activity during differentiation of embryonic stem cells by binding to the core promoter of TERT and controlling its down-regulation. In Homo sapiens (Human), this protein is YLP motif-containing protein 1 (YLPM1).